The primary structure comprises 325 residues: Tetraacyldisaccharide 4'-kinase (325 aa).

58 to 65 serves as a coordination point for ATP; sequence TVGGSGKT.

This sequence belongs to the LpxK family.

The catalysed reaction is a lipid A disaccharide + ATP = a lipid IVA + ADP + H(+). The protein operates within glycolipid biosynthesis; lipid IV(A) biosynthesis; lipid IV(A) from (3R)-3-hydroxytetradecanoyl-[acyl-carrier-protein] and UDP-N-acetyl-alpha-D-glucosamine: step 6/6. Functionally, transfers the gamma-phosphate of ATP to the 4'-position of a tetraacyldisaccharide 1-phosphate intermediate (termed DS-1-P) to form tetraacyldisaccharide 1,4'-bis-phosphate (lipid IVA). The chain is Tetraacyldisaccharide 4'-kinase from Coxiella burnetii (strain CbuG_Q212) (Coxiella burnetii (strain Q212)).